We begin with the raw amino-acid sequence, 278 residues long: Probable endonuclease 4 (278 aa).

The Zn(2+) site is built by H69, H109, E145, D179, H182, H214, D227, H229, and E259.

It belongs to the AP endonuclease 2 family. Zn(2+) is required as a cofactor.

It catalyses the reaction Endonucleolytic cleavage to 5'-phosphooligonucleotide end-products.. Its function is as follows. Endonuclease IV plays a role in DNA repair. It cleaves phosphodiester bonds at apurinic or apyrimidinic (AP) sites, generating a 3'-hydroxyl group and a 5'-terminal sugar phosphate. This Phocaeicola vulgatus (strain ATCC 8482 / DSM 1447 / JCM 5826 / CCUG 4940 / NBRC 14291 / NCTC 11154) (Bacteroides vulgatus) protein is Probable endonuclease 4.